We begin with the raw amino-acid sequence, 322 residues long: Corticotropin-releasing factor-binding protein (322 aa).

The N-terminal stretch at 1–24 (MSPNFKLQCHFILILLTALRGESR) is a signal peptide. 5 disulfides stabilise this stretch: Cys-60–Cys-81, Cys-104–Cys-141, Cys-183–Cys-205, Cys-237–Cys-264, and Cys-277–Cys-318. N-linked (GlcNAc...) asparagine glycosylation is present at Asn-204.

Belongs to the CRF-binding protein family.

It localises to the secreted. Its function is as follows. Binds CRF and inactivates it. May prevent inappropriate pituitary-adrenal stimulation in pregnancy. The polypeptide is Corticotropin-releasing factor-binding protein (Crhbp) (Mus musculus (Mouse)).